Consider the following 504-residue polypeptide: Fibroblast growth factor receptor-like 1 (504 aa).

Positions 1-24 are cleaved as a signal peptide; it reads MTPSPLLLLLLPPLLLGAFPPAAA. At 25 to 378 the chain is on the extracellular side; the sequence is ARGPPKMADK…SSSATSLPWP (354 aa). The Ig-like C2-type 1 domain occupies 29–115; the sequence is PKMADKVVPR…GSLSVNYTLV (87 aa). Cysteines 51 and 99 form a disulfide. Asn111 carries N-linked (GlcNAc...) asparagine glycosylation. The disordered stretch occupies residues 123 to 155; the sequence is GKESLGPDSSSGGQEDPASQQWARPRFTQPSKM. Over residues 129-144 the composition is skewed to polar residues; sequence PDSSSGGQEDPASQQW. Ig-like C2-type domains lie at 147–237 and 246–354; these read PRFT…YKVD and PVLT…AFLT. The cysteines at positions 172 and 221 are disulfide-linked. N-linked (GlcNAc...) asparagine glycans are attached at residues Asn231, Asn255, and Asn293. An intrachain disulfide couples Cys268 to Cys338. A helical membrane pass occupies residues 379-399; that stretch reads VVIGIPAGAVFILGTLLLWLC. Over 400 to 504 the chain is Cytoplasmic; the sequence is QAQKKPCTPA…KVHQHIHYQC (105 aa). The span at 407–418 shows a compositional bias: pro residues; the sequence is TPAPAPPLPGHR. Residues 407-435 form a disordered region; it reads TPAPAPPLPGHRPPGTARDRSGDKDLPSL. Residues 423 to 432 are compositionally biased toward basic and acidic residues; that stretch reads ARDRSGDKDL.

As to quaternary structure, interacts with FGF2 with a low affinity. As to expression, expressed preferentially in cartilaginous tissues and pancreas. Highly expressed in the liver, kidney, heart, brain and skeletal muscle. Weakly expressed in the lung, small intestine and spleen.

Its subcellular location is the membrane. Has a negative effect on cell proliferation. The sequence is that of Fibroblast growth factor receptor-like 1 (FGFRL1) from Homo sapiens (Human).